A 380-amino-acid chain; its full sequence is Cytochrome b (380 aa).

Transmembrane regions (helical) follow at residues I28 to L48, W72 to I93, W109 to L129, and F174 to L194. Residues H78 and H92 each coordinate heme b. The heme b site is built by H178 and H192. Residue H197 coordinates a ubiquinone. 4 helical membrane passes run W222–T243, I285–L305, I317–A337, and Y344–I364.

It belongs to the cytochrome b family. As to quaternary structure, the main subunits of complex b-c1 are: cytochrome b, cytochrome c1 and the Rieske protein. Requires heme b as cofactor.

Its subcellular location is the mitochondrion inner membrane. Component of the ubiquinol-cytochrome c reductase complex (complex III or cytochrome b-c1 complex) that is part of the mitochondrial respiratory chain. The b-c1 complex mediates electron transfer from ubiquinol to cytochrome c. Contributes to the generation of a proton gradient across the mitochondrial membrane that is then used for ATP synthesis. The polypeptide is Cytochrome b (MT-CYB) (Cepaea nemoralis (Banded wood snail)).